A 162-amino-acid chain; its full sequence is Dihydrofolate reductase (162 aa).

Residues 3-161 (KITLIAACAE…TSYAFVHYLR (159 aa)) form the DHFR domain. Residue 7-9 (IAA) coordinates substrate. Residues 8-9 (AA) and 16-21 (IGAGNA) each bind NADP(+). Residue aspartate 29 participates in substrate binding. 45 to 48 (GRKT) is an NADP(+) binding site. Arginine 60 is a substrate binding site. Residues 65–68 (ISRQ) and 98–103 (MGGAQI) contribute to the NADP(+) site. Threonine 117 contributes to the substrate binding site.

Belongs to the dihydrofolate reductase family.

The enzyme catalyses (6S)-5,6,7,8-tetrahydrofolate + NADP(+) = 7,8-dihydrofolate + NADPH + H(+). It participates in cofactor biosynthesis; tetrahydrofolate biosynthesis; 5,6,7,8-tetrahydrofolate from 7,8-dihydrofolate: step 1/1. Functionally, key enzyme in folate metabolism. Catalyzes an essential reaction for de novo glycine and purine synthesis, and for DNA precursor synthesis. This is Dihydrofolate reductase (folA) from Neisseria meningitidis serogroup A / serotype 4A (strain DSM 15465 / Z2491).